We begin with the raw amino-acid sequence, 116 residues long: AQNKGSDDCGGFLKNYSGWISYYKALTTNCVWTIEMKPGHKIILQILPLNLTCGKEYLEVRDQRAGPDNFLKVCGGTGFVYQSSHNVATVKYSRDSHHPASSFNVYFYGIPQGAKA.

C9 and C30 are joined by a disulfide. The 102-residue stretch at 9–110 folds into the CUB domain; that stretch reads CGGFLKNYSG…SSFNVYFYGI (102 aa). An N-linked (GlcNAc...) asparagine glycan is attached at N50. The cysteines at positions 53 and 74 are disulfide-linked. H85 is modified (methylhistidine).

This sequence belongs to the spermadhesin family. Post-translationally, the residue at position 85 was identified as a methylhistidine by mass spectrometry.

The protein resides in the secreted. AQN proteins mediate the binding of boar spermatozoa to component(s) of the egg's zona pellucida by a carbohydrate-binding mechanism. AQN proteins are secretory components of the male accessory glands being coated to the sperm surface at the time of ejaculation. They possess as well heparin-, serine-protease-inhibitor-binding capability. The polypeptide is Carbohydrate-binding protein AQN-3 (Sus scrofa (Pig)).